The primary structure comprises 317 residues: N-acetyl-gamma-glutamyl-phosphate reductase (317 aa).

The active site involves cysteine 136.

The protein belongs to the NAGSA dehydrogenase family. Type 1 subfamily.

It localises to the cytoplasm. It catalyses the reaction N-acetyl-L-glutamate 5-semialdehyde + phosphate + NADP(+) = N-acetyl-L-glutamyl 5-phosphate + NADPH + H(+). The protein operates within amino-acid biosynthesis; L-arginine biosynthesis; N(2)-acetyl-L-ornithine from L-glutamate: step 3/4. Catalyzes the NADPH-dependent reduction of N-acetyl-5-glutamyl phosphate to yield N-acetyl-L-glutamate 5-semialdehyde. The chain is N-acetyl-gamma-glutamyl-phosphate reductase from Stenotrophomonas maltophilia (strain R551-3).